The chain runs to 131 residues: Small ribosomal subunit protein bS6 (131 aa).

The disordered stretch occupies residues 100 to 131 (SPMVKAKDERRSRDYSLEDANMDAEEAGDSEE). The segment covering 104–115 (KAKDERRSRDYS) has biased composition (basic and acidic residues). Over residues 119-131 (ANMDAEEAGDSEE) the composition is skewed to acidic residues.

This sequence belongs to the bacterial ribosomal protein bS6 family.

Binds together with bS18 to 16S ribosomal RNA. The chain is Small ribosomal subunit protein bS6 from Photorhabdus laumondii subsp. laumondii (strain DSM 15139 / CIP 105565 / TT01) (Photorhabdus luminescens subsp. laumondii).